The sequence spans 353 residues: Abasic site processing protein HMCES (353 aa).

Cys2 functions as the Nucleophile in the catalytic mechanism. Residue Cys2 is modified to Thiazolidine linkage to a ring-opened DNA abasic site. Residue Glu127 is part of the active site. Glycyl lysine isopeptide (Lys-Gly) (interchain with G-Cter in SUMO2) cross-links involve residues Lys148 and Lys151. Position 160 is a phosphoserine (Ser160). Residues Lys274 and Lys275 each participate in a glycyl lysine isopeptide (Lys-Gly) (interchain with G-Cter in SUMO2) cross-link. The interval 292–353 is disordered; that stretch reads TKSPKKEVPD…DEPVAKRPNS (62 aa). Position 294 is a phosphoserine (Ser294). Residues 295–307 show a composition bias toward basic and acidic residues; the sequence is PKKEVPDSPKKDA. Lys305 is covalently cross-linked (Glycyl lysine isopeptide (Lys-Gly) (interchain with G-Cter in SUMO2)). Ser321 is subject to Phosphoserine. The short motif at 332–338 is the PIP-box element; the sequence is SLLDRWL. The segment covering 336-353 has biased composition (basic and acidic residues); sequence RWLKQEKEDEPVAKRPNS. Residues Lys339 and Lys342 each participate in a glycyl lysine isopeptide (Lys-Gly) (interchain with G-Cter in SUMO2) cross-link.

This sequence belongs to the SOS response-associated peptidase family. Interacts (via PIP-box motif) with PCNA. Ubiquitinated; the covalent HMCES DNA-protein cross-link is ubiquitinated, leading to its degradation by the proteasome.

The protein localises to the chromosome. Formation and reversal of DNA-protein cross-link depends on DNA context. Catalyzes formation of the thiazolidine linkage in presence of abasic sites in single-stranded DNA. Mediates the reversal of the thiazolidine cross-link in presence of double stranded DNA. In terms of biological role, sensor of abasic sites in single-stranded DNA (ssDNA) required to preserve genome integrity by promoting error-free repair of abasic sites. Acts as an enzyme that recognizes and binds abasic sites in ssDNA at replication forks and chemically modifies the lesion by forming a covalent cross-link with DNA: forms a stable thiazolidine linkage between a ring-opened abasic site and the alpha-amino and sulfhydryl substituents of its N-terminal catalytic cysteine residue. Promotes error-free repair by protecting abasic sites from translesion synthesis (TLS) polymerases and endonucleases that are error-prone and would generate mutations and double-strand breaks. The HMCES DNA-protein cross-link is then either reversed or degraded. HMCES is able to catalyze the reversal of its thiazolidine cross-link and cycle between a cross-link and a non-cross-linked state depending on DNA context: mediates self-reversal of the thiazolidine cross-link in double stranded DNA, allowing APEX1 to initiate downstream repair of abasic sites. The HMCES DNA-protein cross-link can also be degraded by the SPRTN metalloprotease following unfolding by the BRIP1/FANCJ helicase. Has preference for ssDNA, but can also accommodate double-stranded DNA with 3' or 5' overhang (dsDNA), and dsDNA-ssDNA 3' junction. Plays a protective role during somatic hypermutation of immunoglobulin genes in B-cells: acts via its ability to form covalent cross-links with abasic sites, thereby limiting the accumulation of deletions in somatic hypermutation target regions. Also involved in class switch recombination (CSR) in B-cells independently of the formation of a DNA-protein cross-link: acts by binding and protecting ssDNA overhangs to promote DNA double-strand break repair through the microhomology-mediated alternative-end-joining (Alt-EJ) pathway. Acts as a protease: mediates autocatalytic processing of its N-terminal methionine in order to expose the catalytic cysteine. The sequence is that of Abasic site processing protein HMCES from Rattus norvegicus (Rat).